The sequence spans 180 residues: NADH-quinone oxidoreductase subunit I (180 aa).

4Fe-4S ferredoxin-type domains follow at residues 48 to 80 (IVLTRDPDGQERCVACNLCAVACPVGCISLQKA) and 90 to 119 (EFFRINFSRCIFCGLCEEACPTTAIQLTPD). The [4Fe-4S] cluster site is built by C60, C63, C66, C70, C99, C102, C105, and C109.

Belongs to the complex I 23 kDa subunit family. In terms of assembly, NDH-1 is composed of 13 different subunits. Subunits NuoA, H, J, K, L, M, N constitute the membrane sector of the complex. It depends on [4Fe-4S] cluster as a cofactor.

It is found in the cell inner membrane. The catalysed reaction is a quinone + NADH + 5 H(+)(in) = a quinol + NAD(+) + 4 H(+)(out). Functionally, NDH-1 shuttles electrons from NADH, via FMN and iron-sulfur (Fe-S) centers, to quinones in the respiratory chain. The immediate electron acceptor for the enzyme in this species is believed to be ubiquinone. Couples the redox reaction to proton translocation (for every two electrons transferred, four hydrogen ions are translocated across the cytoplasmic membrane), and thus conserves the redox energy in a proton gradient. The chain is NADH-quinone oxidoreductase subunit I from Erwinia tasmaniensis (strain DSM 17950 / CFBP 7177 / CIP 109463 / NCPPB 4357 / Et1/99).